The primary structure comprises 950 residues: MSLPSPLLPVAELAMQNAQQSGYLEHWPQALITQFQFISGLSKFVVETVQRDAQLAEGLPEMLAQESRQEAYRTRLAEQLQACHDEVAGHRVLRQFRNREMVYIAWKDFTQAWSLEASLSHLSELAEAMIFETYQWQYQLCCQEWGTPTNAQGEAQPMLIIGMGKLGGGELNFSSDIDLIFTYPENGETQGARRSIANAQFFTRLGQRLIKALDQQTFDGFCYRVDMRLRPFGESGPLVMSYAALEDYYQEQGRDWERYAMIKARVMGREMYPEYQELRQMLRPFVFRRYIDFSAIQSLRRMKSMISSEVRRRGLSNNIKLGAGGIREIEFIAQVFQLIRGGREPALRQRGLLVTLEAIKQLQLLEEAQVCHLVEAYKYLRRLENLLQAMADKQTQTLPDNELEQLALAVAMGYSQWQALQNDVQQHMAKVHAVFVTLIGDEEDEVSPVERHFNELWDMAHNPEVIEQILQNDLACQNAATMSEQIIQFKADLAKKTLGPRGREVLNRLMPKLFSAIFADADAQFGLPRVLHLLHNIATRTTYLELLDEHPAALTQLVRLCTASPMISEQLARYPILLDELIDPQQLYNPIALDAYRTELRDFLARIPEDDVEQQMDALRQFKQICSLRIAAADIAGVLPVMKVSDHLTYLAEAIVEAVVHQAWQQVAEKYGEPTHLKDREGKGFAVVGYGKVGGWELGYNSDLDVVFLHDCPVNVYTDGKKEIDGRQFYLRLAQRIIHIFSTRTASGILYEVDTRLRPSGASGLLVCPVDAFEEYQHNDAWTWEHQALVRARMIYGDEHLASEFHRVRHQVLAKPREQAKLQKEVADMRAKMRDHLGGKKSDRFMLKQDQGGITDIEFLAQYLVLNYSAEKPKLTRWCDNVRIFETLIAQGVMEEAQAMLLTQAYTTMRDEIHRRNLLNLDADVALDKFVALRQGVSKAWQEWLESSTI.

Positions 1-443 (MSLPSPLLPV…VFVTLIGDEE (443 aa)) are adenylyl removase. The adenylyl transferase stretch occupies residues 450–950 (ERHFNELWDM…WQEWLESSTI (501 aa)).

The protein belongs to the GlnE family. The cofactor is Mg(2+).

The enzyme catalyses [glutamine synthetase]-O(4)-(5'-adenylyl)-L-tyrosine + phosphate = [glutamine synthetase]-L-tyrosine + ADP. The catalysed reaction is [glutamine synthetase]-L-tyrosine + ATP = [glutamine synthetase]-O(4)-(5'-adenylyl)-L-tyrosine + diphosphate. Its function is as follows. Involved in the regulation of glutamine synthetase GlnA, a key enzyme in the process to assimilate ammonia. When cellular nitrogen levels are high, the C-terminal adenylyl transferase (AT) inactivates GlnA by covalent transfer of an adenylyl group from ATP to specific tyrosine residue of GlnA, thus reducing its activity. Conversely, when nitrogen levels are low, the N-terminal adenylyl removase (AR) activates GlnA by removing the adenylyl group by phosphorolysis, increasing its activity. The regulatory region of GlnE binds the signal transduction protein PII (GlnB) which indicates the nitrogen status of the cell. This chain is Bifunctional glutamine synthetase adenylyltransferase/adenylyl-removing enzyme, found in Vibrio vulnificus (strain YJ016).